Reading from the N-terminus, the 285-residue chain is NADPH-dependent 7-cyano-7-deazaguanine reductase (285 aa).

A substrate-binding site is contributed by 91-93; that stretch reads IES. Position 93 to 94 (93 to 94) interacts with NADPH; it reads SK. The active-site Thioimide intermediate is Cys-191. The active-site Proton donor is Asp-198. 230–231 serves as a coordination point for substrate; that stretch reads HE. 259-260 contributes to the NADPH binding site; sequence RG.

This sequence belongs to the GTP cyclohydrolase I family. QueF type 2 subfamily. As to quaternary structure, homodimer.

The protein localises to the cytoplasm. It catalyses the reaction 7-aminomethyl-7-carbaguanine + 2 NADP(+) = 7-cyano-7-deazaguanine + 2 NADPH + 3 H(+). It functions in the pathway tRNA modification; tRNA-queuosine biosynthesis. Functionally, catalyzes the NADPH-dependent reduction of 7-cyano-7-deazaguanine (preQ0) to 7-aminomethyl-7-deazaguanine (preQ1). This is NADPH-dependent 7-cyano-7-deazaguanine reductase from Legionella pneumophila (strain Corby).